A 138-amino-acid chain; its full sequence is Ribulose bisphosphate carboxylase small subunit (138 aa).

The protein belongs to the RuBisCO small chain family. As to quaternary structure, heterohexadecamer of 8 large and 8 small subunits.

Its subcellular location is the plastid. It localises to the chloroplast. Functionally, ruBisCO catalyzes two reactions: the carboxylation of D-ribulose 1,5-bisphosphate, the primary event in carbon dioxide fixation, as well as the oxidative fragmentation of the pentose substrate in the photorespiration process. Both reactions occur simultaneously and in competition at the same active site. Although the small subunit is not catalytic it is essential for maximal activity. The sequence is that of Ribulose bisphosphate carboxylase small subunit from Cyanidioschyzon merolae (strain NIES-3377 / 10D) (Unicellular red alga).